A 440-amino-acid chain; its full sequence is Histidinol dehydrogenase (440 aa).

Residues Tyr-139, Gln-200, and Asn-223 each contribute to the NAD(+) site. Positions 246, 268, and 271 each coordinate substrate. Residues Gln-268 and His-271 each coordinate Zn(2+). Residues Glu-336 and His-337 each act as proton acceptor in the active site. Residues His-337, Asp-370, Glu-424, and His-429 each contribute to the substrate site. Asp-370 contacts Zn(2+). Zn(2+) is bound at residue His-429.

It belongs to the histidinol dehydrogenase family. The cofactor is Zn(2+).

The enzyme catalyses L-histidinol + 2 NAD(+) + H2O = L-histidine + 2 NADH + 3 H(+). It participates in amino-acid biosynthesis; L-histidine biosynthesis; L-histidine from 5-phospho-alpha-D-ribose 1-diphosphate: step 9/9. Its function is as follows. Catalyzes the sequential NAD-dependent oxidations of L-histidinol to L-histidinaldehyde and then to L-histidine. In Bordetella bronchiseptica (strain ATCC BAA-588 / NCTC 13252 / RB50) (Alcaligenes bronchisepticus), this protein is Histidinol dehydrogenase.